Consider the following 222-residue polypeptide: UPF0441 protein CKO_04429 (222 aa).

A compositionally biased stretch (low complexity) spans 177–194; the sequence is TVPKTAMAPKPATTTTVT. A disordered region spans residues 177–222; that stretch reads TVPKTAMAPKPATTTTVTRGGFGESVAKQSTMQRSATGTSNRSMGG. Residues 203-222 show a composition bias toward polar residues; the sequence is AKQSTMQRSATGTSNRSMGG.

The protein belongs to the UPF0441 family.

The polypeptide is UPF0441 protein CKO_04429 (Citrobacter koseri (strain ATCC BAA-895 / CDC 4225-83 / SGSC4696)).